Consider the following 386-residue polypeptide: Probable copper-dependent oxygenase M1 (386 aa).

A signal peptide spans 1 to 22 (MLRMKKICTAFLTIALCTHVLA). Asn86 is a glycosylation site (N-linked (GlcNAc...) asparagine). The chain crosses the membrane as a helical span at residues 334–354 (FVVPIAAIAFIALTIGAGYVF).

The protein belongs to the clz3 oxygenase family.

It is found in the membrane. It participates in secondary metabolite biosynthesis. Functionally, probable copper-dependent oxygenase; part of the gene cluster that mediates the biosynthesis of squalestatin S1 (SQS1, also known as zaragozic acid A), a heavily oxidized fungal polyketide that offers potent cholesterol lowering activity by targeting squalene synthase (SS). SQS1 is composed of a 2,8-dioxobicyclic[3.2.1]octane-3,4,5-tricarboxyclic acid core that is connected to two lipophilic polyketide arms. These initial steps feature the priming of an unusual benzoic acid starter unit onto the highly reducing polyketide synthase pks2, followed by oxaloacetate extension and product release to generate a tricarboxylic acid containing product. The phenylalanine ammonia lyase (PAL) M7 and the acyl-CoA ligase M9 are involved in transforming phenylalanine into benzoyl-CoA. The citrate synthase-like protein R3 is involved in connecting the C-alpha-carbons of the hexaketide chain and oxaloacetate to afford the tricarboxylic acid unit. The potential hydrolytic enzymes, M8 and M10, are in close proximity to pks2 and may participate in product release. On the other side, the tetraketide arm is synthesized by a the squalestatin tetraketide synthase pks1 and enzymatically esterified to the core in the last biosynthetic step, by the acetyltransferase M4. The biosynthesis of the tetraketide must involve 3 rounds of chain extension. After the first and second rounds methyl-transfer occurs, and in all rounds of extension the ketoreductase and dehydratase are active. The enoyl reductase and C-MeT of pks1 are not active in the final round of extension. The acetyltransferase M4 appears to have a broad substrate selectivity for its acyl CoA substrate, allowing the in vitro synthesis of novel squalestatins. The biosynthesis of SQS1 requires several oxidative steps likely performed by oxidoreductases M1, R1 and R2. Finally, in support of the identification of the cluster as being responsible for SQS1 production, the cluster contains a gene encoding a putative squalene synthase (SS) R6, suggesting a likely mechanism for self-resistance. The protein is Probable copper-dependent oxygenase M1 of Phoma sp. (strain ATCC 20986 / MF5453).